A 613-amino-acid polypeptide reads, in one-letter code: Putative two-component response regulator ARR21 (613 aa).

The Response regulatory domain occupies N17–L131. Position 68 is a 4-aspartylphosphate (D68). Residues K178–D195 show a composition bias toward polar residues. Positions K178–K223 are disordered. Positions K221–K224 match the Nuclear localization signal motif. Positions K224 to R274 form a DNA-binding region, myb-like GARP.

Belongs to the ARR family. Type-B subfamily. As to quaternary structure, binds the target DNA as a monomer. Post-translationally, two-component system major event consists of a His-to-Asp phosphorelay between a sensor histidine kinase (HK) and a response regulator (RR). In plants, the His-to-Asp phosphorelay involves an additional intermediate named Histidine-containing phosphotransfer protein (HPt). This multistep phosphorelay consists of a His-Asp-His-Asp sequential transfer of a phosphate group between first a His and an Asp of the HK protein, followed by the transfer to a conserved His of the HPt protein and finally the transfer to an Asp in the receiver domain of the RR protein. In terms of tissue distribution, mainly expressed in siliques. Also found in germinating seedlings, stems, flowers and roots, but not in rosette leaves.

It localises to the nucleus. In terms of biological role, putative transcriptional activator that binds specifically to the DNA sequence 5'-[AG]GATT-3'. Functions as a response regulator involved in His-to-Asp phosphorelay signal transduction system. Phosphorylation of the Asp residue in the receiver domain activates the ability of the protein to promote the transcription of target genes. Could directly activate some type-A response regulators in response to cytokinins. The polypeptide is Putative two-component response regulator ARR21 (ARR21) (Arabidopsis thaliana (Mouse-ear cress)).